Reading from the N-terminus, the 195-residue chain is Ras-related protein Rab-31 (195 aa).

Positions 16, 18, 19, 20, 21, 32, and 33 each coordinate GTP. A Mg(2+)-binding site is contributed by S20. 2 consecutive short sequence motifs (switch) follow at residues 30 to 42 (HFDH…IGAS) and 63 to 79 (AGQE…YRGS). Residue S36 is modified to Phosphoserine. GTP is bound by residues T38, G64, N119, D122, A150, and K151. T38 lines the Mg(2+) pocket. Residues C194 and C195 are each lipidated (S-geranylgeranyl cysteine).

The protein belongs to the small GTPase superfamily. Rab family. As to quaternary structure, interacts (in GDP-bound form) with RIN3 and GAPVD1, which function as guanine exchange factors (GEF). Interacts (in GTP-bound form) with EEA1. Interacts with NGFR. Interacts with EGFR. Interacts with OCRL. Interacts (in GTP-bound form) with APPL2; interaction contributes to or enhances recruitment of APPL2 to the phagosomes; interaction enhances Fc-gamma receptor-mediated phagocytosis through PI3K/Akt signaling in macrophages. It depends on Mg(2+) as a cofactor. As to expression, detected in brain astrocytes, spleen and intestine (at protein level).

The protein localises to the early endosome. It is found in the golgi apparatus. Its subcellular location is the trans-Golgi network. The protein resides in the trans-Golgi network membrane. It localises to the cytoplasmic vesicle. The protein localises to the phagosome. It is found in the phagosome membrane. It carries out the reaction GTP + H2O = GDP + phosphate + H(+). Its activity is regulated as follows. Regulated by guanine nucleotide exchange factors (GEFs) including RIN3 and GAPVD1 which promote the exchange of bound GDP for free GTP. Regulated by GTPase activating proteins (GAPs) which increase the GTP hydrolysis activity. Inhibited by GDP dissociation inhibitors (GDIs) which prevent Rab-GDP dissociation. In terms of biological role, the small GTPases Rab are key regulators of intracellular membrane trafficking, from the formation of transport vesicles to their fusion with membranes. Rabs cycle between an inactive GDP-bound form and an active GTP-bound form that is able to recruit to membranes different set of downstream effectors directly responsible for vesicle formation, movement, tethering and fusion. Required for the integrity and for normal function of the Golgi apparatus and the trans-Golgi network. Plays a role in insulin-stimulated translocation of GLUT4 to the cell membrane. Plays a role in the maturation of phagosomes that engulf pathogens, such as S.aureus and Mycobacterium. Plays a role in M6PR transport from the trans-Golgi network to endosomes. Plays a role in the internalization of EGFR from the cell membrane into endosomes. This Rattus norvegicus (Rat) protein is Ras-related protein Rab-31.